We begin with the raw amino-acid sequence, 505 residues long: Alpha-ketoglutarate-dependent dioxygenase FTO (505 aa).

Residue Thr-4 is modified to Phosphothreonine. Residues 32-327 (TPKDDEFYQQ…SSTHRVAECS (296 aa)) form a fe2OG dioxygenase domain region. Substrate contacts are provided by Arg-96 and Tyr-108. Residue Asn-205 coordinates 2-oxoglutarate. The segment at 213–224 (PYLKEEPYFGMG) is loop L1; predicted to block binding of double-stranded DNA or RNA. Lys-216 is subject to N6-acetyllysine. The Fe cation site is built by His-231 and Asp-233. A substrate-binding site is contributed by 231–234 (HHDE). Residue Tyr-295 coordinates 2-oxoglutarate. Residue His-307 participates in Fe cation binding. 2-oxoglutarate-binding positions include 316–318 (RFS), Thr-320, and Arg-322.

This sequence belongs to the fto family. In terms of assembly, monomer. May also exist as homodimer. The cofactor is Fe(2+).

It localises to the nucleus. It is found in the nucleus speckle. The protein localises to the cytoplasm. The enzyme catalyses a 5'-end (N(7)-methyl 5'-triphosphoguanosine)-(N(6),2'-O-dimethyladenosine) in mRNA + 2-oxoglutarate + O2 = a 5'-end (N(7)-methyl 5'-triphosphoguanosine)-(2'-O-methyladenosine) in mRNA + formaldehyde + succinate + CO2. It carries out the reaction an N(6)-methyladenosine in mRNA + 2-oxoglutarate + O2 = an adenosine in mRNA + formaldehyde + succinate + CO2. The catalysed reaction is N(6)-methyladenosine in U6 snRNA + 2-oxoglutarate + O2 = adenosine in U6 snRNA + formaldehyde + succinate + CO2. It catalyses the reaction a 5'-end (N(7)-methyl 5'-triphosphoguanosine)-(N(6),2'-O-dimethyladenosine) in U6 snRNA + 2-oxoglutarate + O2 = a 5'-end (N(7)-methyl 5'-triphosphoguanosine)-(2'-O-methyladenosine) in U6 snRNA + formaldehyde + succinate + CO2. The enzyme catalyses an N(1)-methyladenosine in tRNA + 2-oxoglutarate + O2 = an adenosine in tRNA + formaldehyde + succinate + CO2. With respect to regulation, activated by ascorbate. Inhibited by N-oxalylglycine, fumarate and succinate. RNA demethylase that mediates oxidative demethylation of different RNA species, such as mRNAs, tRNAs and snRNAs, and acts as a regulator of fat mass, adipogenesis and energy homeostasis. Specifically demethylates N(6)-methyladenosine (m6A) RNA, the most prevalent internal modification of messenger RNA (mRNA) in higher eukaryotes. M6A demethylation by FTO affects mRNA expression and stability. Also able to demethylate m6A in U6 small nuclear RNA (snRNA). Mediates demethylation of N(6),2'-O-dimethyladenosine cap (m6A(m)), by demethylating the N(6)-methyladenosine at the second transcribed position of mRNAs and U6 snRNA. Demethylation of m6A(m) in the 5'-cap by FTO affects mRNA stability by promoting susceptibility to decapping. Also acts as a tRNA demethylase by removing N(1)-methyladenine from various tRNAs. Has no activity towards 1-methylguanine. Has no detectable activity towards double-stranded DNA. Also able to repair alkylated DNA and RNA by oxidative demethylation: demethylates single-stranded RNA containing 3-methyluracil, single-stranded DNA containing 3-methylthymine and has low demethylase activity towards single-stranded DNA containing 1-methyladenine or 3-methylcytosine. Ability to repair alkylated DNA and RNA is however unsure in vivo. Involved in the regulation of fat mass, adipogenesis and body weight, thereby contributing to the regulation of body size and body fat accumulation. Involved in the regulation of thermogenesis and the control of adipocyte differentiation into brown or white fat cells. Regulates activity of the dopaminergic midbrain circuitry via its ability to demethylate m6A in mRNAs. The polypeptide is Alpha-ketoglutarate-dependent dioxygenase FTO (Pongo abelii (Sumatran orangutan)).